The sequence spans 177 residues: Nucleoside-triphosphatase THEP1 (177 aa).

ATP contacts are provided by residues 10 to 17 and 101 to 108; these read GKPGIGKT and CLVIDEIG.

Belongs to the THEP1 NTPase family.

It carries out the reaction a ribonucleoside 5'-triphosphate + H2O = a ribonucleoside 5'-diphosphate + phosphate + H(+). In terms of biological role, has nucleotide phosphatase activity towards ATP, GTP, CTP, TTP and UTP. May hydrolyze nucleoside diphosphates with lower efficiency. In Natranaerobius thermophilus (strain ATCC BAA-1301 / DSM 18059 / JW/NM-WN-LF), this protein is Nucleoside-triphosphatase THEP1.